Consider the following 236-residue polypeptide: Ribose-5-phosphate isomerase A (236 aa).

Residues 33–36, 90–93, and 103–106 contribute to the substrate site; these read TGST, DGAD, and KGGG. The active-site Proton acceptor is E112. K130 lines the substrate pocket.

It belongs to the ribose 5-phosphate isomerase family. As to quaternary structure, homodimer.

The enzyme catalyses aldehydo-D-ribose 5-phosphate = D-ribulose 5-phosphate. The protein operates within carbohydrate degradation; pentose phosphate pathway; D-ribose 5-phosphate from D-ribulose 5-phosphate (non-oxidative stage): step 1/1. Catalyzes the reversible conversion of ribose-5-phosphate to ribulose 5-phosphate. This chain is Ribose-5-phosphate isomerase A, found in Nostoc sp. (strain PCC 7120 / SAG 25.82 / UTEX 2576).